The chain runs to 441 residues: UDP-N-acetylmuramoylalanine--D-glutamate ligase (441 aa).

129–135 (GTNGKST) is a binding site for ATP.

It belongs to the MurCDEF family.

It localises to the cytoplasm. It catalyses the reaction UDP-N-acetyl-alpha-D-muramoyl-L-alanine + D-glutamate + ATP = UDP-N-acetyl-alpha-D-muramoyl-L-alanyl-D-glutamate + ADP + phosphate + H(+). It functions in the pathway cell wall biogenesis; peptidoglycan biosynthesis. Its function is as follows. Cell wall formation. Catalyzes the addition of glutamate to the nucleotide precursor UDP-N-acetylmuramoyl-L-alanine (UMA). In Zymomonas mobilis subsp. mobilis (strain ATCC 31821 / ZM4 / CP4), this protein is UDP-N-acetylmuramoylalanine--D-glutamate ligase.